Reading from the N-terminus, the 298-residue chain is tRNA-uridine aminocarboxypropyltransferase 2 (298 aa).

The residue at position 1 (M1) is an N-acetylmethionine. Residues 1–52 (MESQKEARILQEPVARPPGASRSQTPNAKERQEGGPVPAAAALGAEADDDSA) form a disordered region. Position 132 is a phosphoserine (S132). A DXTW motif is present at residues 178–181 (DGTW).

The protein belongs to the TDD superfamily. DTWD2 family.

It is found in the nucleus. Its subcellular location is the cytoplasm. It catalyses the reaction a uridine in tRNA + S-adenosyl-L-methionine = a 3-[(3S)-3-amino-3-carboxypropyl]uridine in tRNA + S-methyl-5'-thioadenosine + H(+). Its function is as follows. Catalyzes the formation of 3-(3-amino-3-carboxypropyl)uridine (acp3U) at position 20a in the D-loop of several cytoplasmic tRNAs (acp3U(20a)). Also has a weak activity to form acp3U at position 20 in the D-loop of tRNAs (acp3U(20)). Involved in glycoRNA biosynthesis by mediating formation of acp3U, which acts as an attachment site for N-glycans on tRNAs. GlycoRNAs consist of RNAs modified with secretory N-glycans that are presented on the cell surface. This is tRNA-uridine aminocarboxypropyltransferase 2 from Macaca fascicularis (Crab-eating macaque).